The chain runs to 463 residues: MGCKGIEDVAMNGRLKKEIEENGFGKMTEVQLKCIPEVLKGKDVVVQSPTGTGKTMAFLAPILSCIYDGKGRGRPGVTAVVITPTRELALQIREVAGLFDVKCECFIGGMSIEEDYKRMKEEFSIAVGTPGRLLEIVGKETKKFSSLSHLVLDEADKLLGFGFEEKLMQLLAKLPRNRVTGLFSATRNDSVDKLSRVFLRNPVSINVGNNEMPVALEYIVVSPMEKLLVLMDIVTGRRCIVFFATCSEVDFFSGLVSRAGFGNICKIHGKISQDERNRVYEEFFQRDGLLFCTDVAARGIDFRGVDLVVHFDVPKEYSSIVHRSGRTARNGSKGESVLFVMPNERAYVEFLKLKGIPAVESSYRMKSSLSYQDIKSMISPELLGLSVKAFVSYIRSYKEHFVSYILDYKGLDFDSLAELFFLERIPGMAELRNVKFEKFTKPARDGKKRALPKKKYRKKRAIK.

The Q motif signature appears at Lys-4–Leu-32. The 171-residue stretch at Ile-35–Ile-205 folds into the Helicase ATP-binding domain. Ser-48 to Thr-55 serves as a coordination point for ATP. The DEAD box motif lies at Asp-153–Asp-156. The Helicase C-terminal domain maps to Lys-226–Leu-382. The interval Arg-444–Lys-463 is disordered. The segment covering Gly-446–Lys-463 has biased composition (basic residues).

Belongs to the DEAD box helicase family. DDX55/SPB4 subfamily. In terms of assembly, component of pre-60S ribosomal complexes.

Its subcellular location is the nucleus. The protein resides in the nucleolus. It catalyses the reaction ATP + H2O = ADP + phosphate + H(+). Functionally, ATP-binding RNA helicase involved in the biogenesis of 60S ribosomal subunits. Binds 90S pre-ribosomal particles and dissociates from pre-60S ribosomal particles after processing of 27SB pre-rRNA. Required for the normal formation of 18S rRNA through the processing of pre-rRNAs at sites A0, A1 and A2, and the normal formation of 25S and 5.8S rRNAs through the processing of pre-rRNAs at sites C1 and C2. The polypeptide is ATP-dependent rRNA helicase SPB4 (Encephalitozoon cuniculi (strain GB-M1) (Microsporidian parasite)).